The primary structure comprises 304 residues: uncharacterized protein (304 aa).

Positions 226–244 (SRNSESSRQSNLNSPNDSV) are enriched in polar residues. A disordered region spans residues 226 to 263 (SRNSESSRQSNLNSPNDSVKFNEFNKSNKSTKTNPNNI). Over residues 246–262 (FNEFNKSNKSTKTNPNN) the composition is skewed to low complexity.

This is an uncharacterized protein from Acanthamoeba polyphaga (Amoeba).